We begin with the raw amino-acid sequence, 553 residues long: Putative transport protein Ent638_0015 (553 aa).

The next 5 membrane-spanning stretches (helical) occupy residues 4–24, 28–48, 65–85, 95–115, and 158–178; these read IALT…IGNI, GVGL…HFAE, FGLI…FFAS, LFAL…HKLF, and MSYA…MWLV. 2 RCK C-terminal domains span residues 191 to 276 and 279 to 361; these read KKHE…VIGQ and ETSL…MVGN. A run of 6 helical transmembrane segments spans residues 371 to 391, 403 to 425, 439 to 459, 464 to 484, 493 to 513, and 533 to 553; these read MLPV…PLYV, AGGP…LYWF, IVLF…DTLA, ISWI…IGIL, YLTL…LAFA, and LVMF…WGMG.

It belongs to the AAE transporter (TC 2.A.81) family. YidE subfamily.

Its subcellular location is the cell membrane. In Enterobacter sp. (strain 638), this protein is Putative transport protein Ent638_0015.